The primary structure comprises 481 residues: MLLLPLLLPVLGAGSLNKDPSYSLQVQRQVPVPEGLCVIVSCNLSYPRDGWDESTAAYGYWFKGRTSPKTGAPVATNNQSREVAMSTRDRFQLTGDPGKGSCSLVIRDAQREDEAWYFFRVERGSRVRHSFLSNAFFLKVTALTQKPDVYIPETLEPGQPVTVICVFNWAFKKCPAPSFSWTGAALSPRRTRPSTSHFSVLSFTPSPQDHDTDLTCHVDFSRKGVSAQRTVRLRVASLELQGNVIYLEVQKGQFLRLLCAADSQPPATLSWVLQDRVLSSSHPWGPRTLGLELPGVKAGDSGRYTCRAENRLGSQQRALDLSVQYPPENLRVMVSQANRTVLENLRNGTSLRVLEGQSLRLVCVTHSSPPARLSWTWGEQTVGPSQPSDPGVLQLPRVQMEHEGEFTCHARHPLGSQRVSLSFSVHCKSGPMTGVVLVAVGEVAMKILLLCLCLILLRVRSCRRKAARAALGMEAADAVTD.

Positions 1–16 (MLLLPLLLPVLGAGSL) are cleaved as a signal peptide. Residues 17-434 (NKDPSYSLQV…VHCKSGPMTG (418 aa)) lie on the Extracellular side of the membrane. Positions 19 to 122 (DPSYSLQVQR…DEAWYFFRVE (104 aa)) constitute an Ig-like V-type domain. Intrachain disulfides connect cysteine 37/cysteine 174, cysteine 42/cysteine 102, cysteine 165/cysteine 216, and cysteine 259/cysteine 306. 2 N-linked (GlcNAc...) asparagine glycosylation sites follow: asparagine 43 and asparagine 78. Arginine 120 serves as a coordination point for N-acetylneuraminate. 3 consecutive Ig-like C2-type domains span residues 147–232 (PDVY…RTVR), 238–322 (LELQ…LDLS), and 327–424 (PENL…LSFS). N-linked (GlcNAc...) asparagine glycosylation is found at asparagine 338 and asparagine 347. A disulfide bond links cysteine 363 and cysteine 408. A helical transmembrane segment spans residues 435–455 (VVLVAVGEVAMKILLLCLCLI). Over 456–481 (LLRVRSCRRKAARAALGMEAADAVTD) the chain is Cytoplasmic.

Belongs to the immunoglobulin superfamily. SIGLEC (sialic acid binding Ig-like lectin) family. In terms of tissue distribution, expressed in bone marrow, fetal brain, fetal liver, lung and salivary gland. Detected in brain, macrophage, cancerous esophagus and lung at protein level.

Its subcellular location is the membrane. Its function is as follows. Putative adhesion molecule that mediates sialic-acid dependent binding to cells. This chain is Sialic acid-binding Ig-like lectin 16 (SIGLEC16), found in Homo sapiens (Human).